Reading from the N-terminus, the 126-residue chain is RutC family protein PH0854 (126 aa).

This sequence belongs to the RutC family.

The protein is RutC family protein PH0854 of Pyrococcus horikoshii (strain ATCC 700860 / DSM 12428 / JCM 9974 / NBRC 100139 / OT-3).